A 482-amino-acid polypeptide reads, in one-letter code: Glycogen synthase (482 aa).

Lysine 15 lines the ADP-alpha-D-glucose pocket.

Belongs to the glycosyltransferase 1 family. Bacterial/plant glycogen synthase subfamily.

It carries out the reaction [(1-&gt;4)-alpha-D-glucosyl](n) + ADP-alpha-D-glucose = [(1-&gt;4)-alpha-D-glucosyl](n+1) + ADP + H(+). It functions in the pathway glycan biosynthesis; glycogen biosynthesis. Its function is as follows. Synthesizes alpha-1,4-glucan chains using ADP-glucose. This Elusimicrobium minutum (strain Pei191) protein is Glycogen synthase.